A 138-amino-acid chain; its full sequence is Chorion protein S16 (138 aa).

A signal peptide spans 1 to 20 (MSATLRLLCLMACCVALAVA).

Belongs to the chorion protein S16 family.

The protein localises to the secreted. Chorion membrane (egg shell) protein; plays a role in protecting the egg from the environment. This chain is Chorion protein S16 (Cp16), found in Drosophila melanogaster (Fruit fly).